We begin with the raw amino-acid sequence, 441 residues long: Protein arginine methyltransferase NDUFAF7, mitochondrial (441 aa).

A mitochondrion-targeting transit peptide spans 1–46 (MNFLAAAGVRRLCAMRAVLPCLWRGKYFSSGNEPAENNTVTPMLRH). Residues 415–434 (GRNHQTNARQSKPSPSPVAG) are disordered. Residues 418–427 (HQTNARQSKP) are compositionally biased toward polar residues.

It belongs to the NDUFAF7 family. In terms of assembly, interacts with NDUFS2.

It is found in the mitochondrion. It carries out the reaction L-arginyl-[protein] + 2 S-adenosyl-L-methionine = N(omega),N(omega)'-dimethyl-L-arginyl-[protein] + 2 S-adenosyl-L-homocysteine + 2 H(+). In terms of biological role, arginine methyltransferase involved in the assembly or stability of mitochondrial NADH:ubiquinone oxidoreductase complex (complex I). Acts by mediating symmetric dimethylation of 'Arg-118' of NDUFS2 after it assembles into the complex I, stabilizing the early intermediate complex. The chain is Protein arginine methyltransferase NDUFAF7, mitochondrial from Bos taurus (Bovine).